The sequence spans 204 residues: Abscisic acid receptor PYL3 (204 aa).

The segment at 40 to 191 (HEPRDHQCSS…NLKSLAEVSE (152 aa)) is START-like. A disulfide bridge links Cys-47 with Cys-172. Residues Lys-76, 104–109 (ATRSTE), 131–137 (RLKNYSS), and Glu-156 contribute to the abscisate site. The short motif at 100-104 (SGLPA) is the Gate loop element. The Latch loop signature appears at 130-132 (HRL).

The protein belongs to the PYR/PYL/RCAR abscisic acid intracellular receptor family. In terms of assembly, monomer. Interacts with PP2C50. Binding to PP2C50 is dependent on the presence of abscisic acid (ABA). Interacts with PP2C30 and PP2C53.

The protein resides in the cytoplasm. It localises to the cytosol. It is found in the nucleus. In terms of biological role, involved in abscisic acid (ABA) signaling during seed germination and abiotic stress response. Acts as a positive regulator of ABA-mediated inhibition of seed germination, and tolerance to drought and cold stresses. Together with PP2C50 and SAPK10, may form an ABA signaling module involved in stress response. Inhibits the protein phosphatases PP2C06 and PP2C09 when activated by abscisic acid (ABA). The sequence is that of Abscisic acid receptor PYL3 from Oryza sativa subsp. japonica (Rice).